Here is a 183-residue protein sequence, read N- to C-terminus: Small ribosomal subunit protein uS4c (183 aa).

Positions 82 to 143 constitute an S4 RNA-binding domain; the sequence is MRLDNILFRL…KQRSKALIQN (62 aa).

Belongs to the universal ribosomal protein uS4 family. In terms of assembly, part of the 30S ribosomal subunit. Contacts protein S5. The interaction surface between S4 and S5 is involved in control of translational fidelity.

The protein localises to the plastid. Its subcellular location is the chloroplast. One of the primary rRNA binding proteins, it binds directly to 16S rRNA where it nucleates assembly of the body of the 30S subunit. In terms of biological role, with S5 and S12 plays an important role in translational accuracy. This is Small ribosomal subunit protein uS4c (rps4) from Schizorhiza neglecta (Lapeirousia neglecta).